We begin with the raw amino-acid sequence, 145 residues long: 3-hydroxyacyl-[acyl-carrier-protein] dehydratase FabZ (145 aa).

Residue His-51 is part of the active site.

This sequence belongs to the thioester dehydratase family. FabZ subfamily.

It is found in the cytoplasm. The enzyme catalyses a (3R)-hydroxyacyl-[ACP] = a (2E)-enoyl-[ACP] + H2O. Its function is as follows. Involved in unsaturated fatty acids biosynthesis. Catalyzes the dehydration of short chain beta-hydroxyacyl-ACPs and long chain saturated and unsaturated beta-hydroxyacyl-ACPs. This is 3-hydroxyacyl-[acyl-carrier-protein] dehydratase FabZ from Staphylococcus haemolyticus (strain JCSC1435).